Reading from the N-terminus, the 618-residue chain is Sodium/iodide cotransporter (618 aa).

Residues 1-14 are Extracellular-facing; it reads MEGAEAGARATFGP. A helical membrane pass occupies residues 15-31; that stretch reads WDYGVFATMLLVSTGIG. Topologically, residues 32–56 are cytoplasmic; it reads LWVGLARGGQRSADDFFTGGRQLAA. The chain crosses the membrane as a discontinuously helical span at residues 57–80; sequence VPVGLSLAASFMSAVQVLGVPAEA. S69, V71, and Q72 together coordinate Na(+). V76 contributes to the iodide binding site. Over 81 to 84 the chain is Extracellular; that stretch reads ARYG. A helical membrane pass occupies residues 85 to 105; the sequence is LKFLWMCVGQLLNSLLTALLF. M90 is an iodide binding site. Residues 106–130 lie on the Cytoplasmic side of the membrane; that stretch reads LPIFYRLGLTSTYQYLELRFSRAVR. Residues 131 to 157 traverse the membrane as a helical segment; that stretch reads LCGTLQYLVATMLYTGIVIYAPALILN. Residue Y144 coordinates Na(+). Residues 158-163 are Extracellular-facing; that stretch reads QVTGLD. A helical membrane pass occupies residues 164-181; the sequence is IWASLLSTGIICTLYTTV. Over 182-189 the chain is Cytoplasmic; that stretch reads GGMKAVVW. Residues 190–208 form a helical membrane-spanning segment; the sequence is TDVFQVVVMLVGFWVILAR. Over 209–243 the chain is Extracellular; it reads GVMLMGGPWNVLSLAQNHSRINLMDFDPDPRSRYT. Residues 244–266 form a discontinuously helical membrane-spanning segment; that stretch reads FWTFVVGGSLVWLSMYGVNQAQV. Position 255 (W255) interacts with iodide. M258 contacts Na(+). Residues 267 to 278 lie on the Cytoplasmic side of the membrane; sequence QRYVACHTERKA. Residues 279 to 301 traverse the membrane as a helical segment; that stretch reads KLALLVNQLGLFLIVASAACCGI. Topologically, residues 302–335 are extracellular; sequence VMFVYYKDCDPLLTGRIAAPDQYMPLLVLDIFED. A helical membrane pass occupies residues 336 to 363; that stretch reads LPGVPGLFLACAYSGTLSTASTSINAMA. Topologically, residues 364-386 are cytoplasmic; the sequence is AVTVEDLIKPRMPSLAPRKLVFI. A helical transmembrane segment spans residues 387 to 408; it reads SKGLSFIYGSTCLTVAALSSLL. Topologically, residues 409-411 are extracellular; the sequence is GGG. A helical transmembrane segment spans residues 412–437; it reads VLQGSFTVMGVISGPLLGAFTLGMLL. L413 contributes to the iodide binding site. Na(+)-binding residues include S416 and F417. F417 is a binding site for iodide. Topologically, residues 438–441 are cytoplasmic; the sequence is PACN. Residues 442–465 form a helical membrane-spanning segment; sequence TPGVLSGLTAGLAVSLWVAVGATL. Residues 466–520 are Extracellular-facing; sequence YPPGEQTMGVLPTSAAGCTNASVLPSPPGAANTSRGIPSSGMDSGRPAFADTFYA. Residues N485 and N497 are each glycosylated (N-linked (GlcNAc...) asparagine). A helical transmembrane segment spans residues 521–545; that stretch reads VSYLYYGALGTLTTMLCGALISYLT. Over 546-618 the chain is Cytoplasmic; sequence GPTKRSSLGP…YLGHDVETNL (73 aa). S551 carries the post-translational modification Phosphoserine; by PKA. Positions 571 to 587 are enriched in basic and acidic residues; that stretch reads PKEDTTTLEDSLVKGPE. The segment at 571–618 is disordered; sequence PKEDTTTLEDSLVKGPEDIPAATKKPPGFRPEAETHPLYLGHDVETNL.

Belongs to the sodium:solute symporter (SSF) (TC 2.A.21) family. As to quaternary structure, monomer. In terms of processing, glycosylated.

It localises to the cell membrane. Its subcellular location is the cytoplasm. The enzyme catalyses iodide(out) + 2 Na(+)(out) = iodide(in) + 2 Na(+)(in). The catalysed reaction is chlorate(out) + 2 Na(+)(out) = chlorate(in) + 2 Na(+)(in). It carries out the reaction thiocyanate(out) + 2 Na(+)(out) = thiocyanate(in) + 2 Na(+)(in). It catalyses the reaction nitrate(out) + 2 Na(+)(out) = nitrate(in) + 2 Na(+)(in). The enzyme catalyses selenocyanate(out) + 2 Na(+)(out) = selenocyanate(in) + 2 Na(+)(in). Perchlorate inhibits iodide transport activity. Oxyanions inhibit iodide transport activity by blocking the binding sites for iodide and one of the sodium ions. Its function is as follows. Sodium:iodide symporter that mediates the transport of iodide into the thyroid gland. Can also mediate the transport of chlorate, thiocynate, nitrate and selenocynate. This chain is Sodium/iodide cotransporter (Slc5a5), found in Mus musculus (Mouse).